The sequence spans 245 residues: TPR repeat-containing protein PA4299 (245 aa).

The first 16 residues, 1-16, serve as a signal peptide directing secretion; that stretch reads MKALIGIGLCAALLGG. A lipid anchor (N-palmitoyl cysteine) is attached at C17. C17 carries S-diacylglycerol cysteine lipidation. TPR repeat units follow at residues 100 to 133, 135 to 167, and 169 to 200; these read PEAHHGLGLLALRNGDSARAVLELREAARLRPTE, RFRNDLGVALLKRGDRVGARFEFITALELQQGG, and LPATNLLGLLYLQGDREDAQRLIERLQLDARD. The interval 210-245 is disordered; that stretch reads SWGAVPTPGAAPASDDPLAELPAEANMHTAMANEAP.

The protein resides in the cell membrane. This chain is TPR repeat-containing protein PA4299, found in Pseudomonas aeruginosa (strain ATCC 15692 / DSM 22644 / CIP 104116 / JCM 14847 / LMG 12228 / 1C / PRS 101 / PAO1).